The following is a 250-amino-acid chain: 3-deoxy-manno-octulosonate cytidylyltransferase (250 aa).

This sequence belongs to the KdsB family.

Its subcellular location is the cytoplasm. The enzyme catalyses 3-deoxy-alpha-D-manno-oct-2-ulosonate + CTP = CMP-3-deoxy-beta-D-manno-octulosonate + diphosphate. Its pathway is nucleotide-sugar biosynthesis; CMP-3-deoxy-D-manno-octulosonate biosynthesis; CMP-3-deoxy-D-manno-octulosonate from 3-deoxy-D-manno-octulosonate and CTP: step 1/1. The protein operates within bacterial outer membrane biogenesis; lipopolysaccharide biosynthesis. Its function is as follows. Activates KDO (a required 8-carbon sugar) for incorporation into bacterial lipopolysaccharide in Gram-negative bacteria. This chain is 3-deoxy-manno-octulosonate cytidylyltransferase, found in Sinorhizobium medicae (strain WSM419) (Ensifer medicae).